The primary structure comprises 800 residues: Isoamylase 2, chloroplastic (800 aa).

Positions 1–10 are enriched in pro residues; sequence MASLPAPPTP. Residues 1–22 are disordered; it reads MASLPAPPTPLGSCPRGRGGGR. The N-terminal 34 residues, 1-34, are a transit peptide targeting the chloroplast; that stretch reads MASLPAPPTPLGSCPRGRGGGRVVARPRRAGLAC.

Belongs to the glycosyl hydrolase 13 family. As to quaternary structure, forms a hetero-hexamer composed of five ISA1 and one ISA2. Highly expressed in developing endosperm and leaves.

The protein resides in the plastid. The protein localises to the chloroplast. The catalysed reaction is Hydrolysis of (1-&gt;6)-alpha-D-glucosidic branch linkages in glycogen, amylopectin and their beta-limit dextrins.. Functionally, starch-debranching enzyme involved in amylopectin biosynthesis in endosperm. Functions by removing excess branches or improper branches that interfere with the formation of double helices of the cluster chains of amylopectin and crystallization of starch. Works together with ISA1 as heterooligomer. The heterooligomer ISA1 and ISA2 possesses higher affinity than the ISA1 homooligomer for various branched polyglucans in vitro, but no marked differences exist in chain preferences for debranching of amylopectin and phytoglycogen between these forms. This Oryza sativa subsp. japonica (Rice) protein is Isoamylase 2, chloroplastic.